The chain runs to 321 residues: Probable NAD(P)H-dependent D-xylose reductase xyl1 (321 aa).

Y50 (proton donor) is an active-site residue. H112 serves as a coordination point for substrate. Residues 166–167 (SN), 215–224 (SSFGPLSFVE), and 271–281 (KSNDPTRLAQN) contribute to the NAD(+) site.

It belongs to the aldo/keto reductase family.

It carries out the reaction xylitol + NAD(+) = D-xylose + NADH + H(+). It catalyses the reaction xylitol + NADP(+) = D-xylose + NADPH + H(+). It participates in carbohydrate metabolism; D-xylose degradation. Functionally, catalyzes the initial reaction in the xylose utilization pathway by reducing D-xylose into xylitol. Xylose is a major component of hemicelluloses such as xylan. Most fungi utilize D-xylose via three enzymatic reactions, xylose reductase (XR), xylitol dehydrogenase (XDH), and xylulokinase, to form xylulose 5-phosphate, which enters pentose phosphate pathway. The sequence is that of Probable NAD(P)H-dependent D-xylose reductase xyl1 (xyl1) from Neosartorya fischeri (strain ATCC 1020 / DSM 3700 / CBS 544.65 / FGSC A1164 / JCM 1740 / NRRL 181 / WB 181) (Aspergillus fischerianus).